We begin with the raw amino-acid sequence, 443 residues long: Thymidine phosphorylase (443 aa).

The protein belongs to the thymidine/pyrimidine-nucleoside phosphorylase family. As to quaternary structure, homodimer.

It carries out the reaction thymidine + phosphate = 2-deoxy-alpha-D-ribose 1-phosphate + thymine. Its pathway is pyrimidine metabolism; dTMP biosynthesis via salvage pathway; dTMP from thymine: step 1/2. Functionally, the enzymes which catalyze the reversible phosphorolysis of pyrimidine nucleosides are involved in the degradation of these compounds and in their utilization as carbon and energy sources, or in the rescue of pyrimidine bases for nucleotide synthesis. This chain is Thymidine phosphorylase, found in Shewanella denitrificans (strain OS217 / ATCC BAA-1090 / DSM 15013).